The primary structure comprises 245 residues: Phosphoribosylaminoimidazole-succinocarboxamide synthase (245 aa).

Belongs to the SAICAR synthetase family.

It carries out the reaction 5-amino-1-(5-phospho-D-ribosyl)imidazole-4-carboxylate + L-aspartate + ATP = (2S)-2-[5-amino-1-(5-phospho-beta-D-ribosyl)imidazole-4-carboxamido]succinate + ADP + phosphate + 2 H(+). Its pathway is purine metabolism; IMP biosynthesis via de novo pathway; 5-amino-1-(5-phospho-D-ribosyl)imidazole-4-carboxamide from 5-amino-1-(5-phospho-D-ribosyl)imidazole-4-carboxylate: step 1/2. This chain is Phosphoribosylaminoimidazole-succinocarboxamide synthase, found in Nostoc sp. (strain PCC 7120 / SAG 25.82 / UTEX 2576).